We begin with the raw amino-acid sequence, 128 residues long: Large ribosomal subunit protein uL18 (128 aa).

The interval 1 to 36 (MAKRSSLTRRGVSPRAAARARRHMRVRKKVRGTPER) is disordered. The segment covering 18–31 (ARARRHMRVRKKVR) has biased composition (basic residues).

This sequence belongs to the universal ribosomal protein uL18 family. As to quaternary structure, part of the 50S ribosomal subunit; part of the 5S rRNA/L5/L18/L25 subcomplex. Contacts the 5S and 23S rRNAs.

This is one of the proteins that bind and probably mediate the attachment of the 5S RNA into the large ribosomal subunit, where it forms part of the central protuberance. This chain is Large ribosomal subunit protein uL18, found in Thermobifida fusca (strain YX).